We begin with the raw amino-acid sequence, 874 residues long: Probable RNA-directed RNA polymerase (874 aa).

The protein belongs to the totiviridae RNA-directed RNA polymerase family.

The catalysed reaction is RNA(n) + a ribonucleoside 5'-triphosphate = RNA(n+1) + diphosphate. Its function is as follows. RNA-dependent RNA polymerase which replicates the viral genome. Catalyzes the transcription of fully conservative plus-strand genomic RNAs that are extruded from the virion into the cytoplasm where they function as mRNAs for translation of viral proteins and also as substrates for encapsidation to form new virions. Once encapsidated, the positive strand is converted to dsRNA by the RNA-directed RNA polymerase. Displays ssRNA-binding activity. This Leishmania major (LRV-1-1) protein is Probable RNA-directed RNA polymerase (ORF3).